The primary structure comprises 198 residues: Segregation and condensation protein B (198 aa).

The interval 169-198 (LADPAAEEPDQNEMDLFFDRFNQSKEQEEE) is disordered.

This sequence belongs to the ScpB family. As to quaternary structure, homodimer. Homodimerization may be required to stabilize the binding of ScpA to the Smc head domains. Component of a cohesin-like complex composed of ScpA, ScpB and the Smc homodimer, in which ScpA and ScpB bind to the head domain of Smc. The presence of the three proteins is required for the association of the complex with DNA.

Its subcellular location is the cytoplasm. Its function is as follows. Participates in chromosomal partition during cell division. May act via the formation of a condensin-like complex containing Smc and ScpA that pull DNA away from mid-cell into both cell halves. This Listeria monocytogenes serotype 4a (strain HCC23) protein is Segregation and condensation protein B.